The chain runs to 179 residues: Probable F-box protein At3g25550 (179 aa).

One can recognise an F-box domain in the interval I19–N55.

The sequence is that of Probable F-box protein At3g25550 from Arabidopsis thaliana (Mouse-ear cress).